A 170-amino-acid chain; its full sequence is ATP synthase subunit b (170 aa).

Residues 20-42 (QLLAMLVLLALLKKFALGPLLNI) traverse the membrane as a helical segment.

This sequence belongs to the ATPase B chain family. As to quaternary structure, F-type ATPases have 2 components, F(1) - the catalytic core - and F(0) - the membrane proton channel. F(1) has five subunits: alpha(3), beta(3), gamma(1), delta(1), epsilon(1). F(0) has three main subunits: a(1), b(2) and c(10-14). The alpha and beta chains form an alternating ring which encloses part of the gamma chain. F(1) is attached to F(0) by a central stalk formed by the gamma and epsilon chains, while a peripheral stalk is formed by the delta and b chains.

It is found in the cell membrane. F(1)F(0) ATP synthase produces ATP from ADP in the presence of a proton or sodium gradient. F-type ATPases consist of two structural domains, F(1) containing the extramembraneous catalytic core and F(0) containing the membrane proton channel, linked together by a central stalk and a peripheral stalk. During catalysis, ATP synthesis in the catalytic domain of F(1) is coupled via a rotary mechanism of the central stalk subunits to proton translocation. In terms of biological role, component of the F(0) channel, it forms part of the peripheral stalk, linking F(1) to F(0). This chain is ATP synthase subunit b, found in Bacillus velezensis (strain DSM 23117 / BGSC 10A6 / LMG 26770 / FZB42) (Bacillus amyloliquefaciens subsp. plantarum).